A 547-amino-acid chain; its full sequence is MSTDTAPAQTMHAGRLIARRLKASGIDTVFTLSGGHLFSIYDGCREEGIRLIDTRHEQTAAFAAEGWSKVTRVPGVAALTAGPGITNGMSAMAAAQQNQSPLVVLGGRAPALRWGMGSLQEIDHVPFVAPVARFAATAQSAENAGLLVDQALQAAVSAPSGVAFVDFPMDHAFSMSSDNGRPGALTELPAGPTPAGDALDRAAGLLSTAQRPVIMAGTNVWWGHAEAALLRLVEERHIPVLMNGMARGVVPADHRLAFSRARSKALGEADVALIVGVPMDFRLGFGGVFGSTTQLIVADRVEPAREHPRPVAAGLYGDLTATLSALAGSGGTDHQGWIEELATAETMARDLEKAELVDDRIPLHPMRVYAELAALLERDALVVIDAGDFGSYAGRMIDSYLPGCWLDSGPFGCLGSGPGYALAAKLARPQRQVVLLQGDGAFGFSGMEWDTLVRHNVAVVSVIGNNGIWGLEKHPMEALYGYSVVAELRPGTRYDEVVRALGGHGELVSVPAELRPALERAFASGLPAVVNVLTDPSVAYPRRSNLA.

E57 contributes to the thiamine diphosphate binding site. FAD-binding positions include P159 and D299–D318. Residues D388–I468 form a thiamine pyrophosphate binding region. Mg(2+) is bound by residues D439 and N466.

It belongs to the TPP enzyme family. Mg(2+) serves as cofactor. The cofactor is thiamine diphosphate.

The enzyme catalyses 2 pyruvate + H(+) = (2S)-2-acetolactate + CO2. The protein operates within amino-acid biosynthesis; L-isoleucine biosynthesis; L-isoleucine from 2-oxobutanoate: step 1/4. It functions in the pathway amino-acid biosynthesis; L-valine biosynthesis; L-valine from pyruvate: step 1/4. The polypeptide is Probable acetolactate synthase (ilvG) (Mycobacterium bovis (strain ATCC BAA-935 / AF2122/97)).